A 366-amino-acid chain; its full sequence is GTPase Obg (366 aa).

The region spanning 1 to 161 (MRFVDEARIQ…FNLRLELKIL (161 aa)) is the Obg domain. The disordered stretch occupies residues 121–148 (SGGRGGKGNEHFKSSTMRAPRFSQPGEP). An OBG-type G domain is found at 162–334 (ADAGLIGLPN…LVQELWQVCE (173 aa)). GTP contacts are provided by residues 168 to 175 (GLPNAGKS), 193 to 197 (FTTLT), 217 to 220 (DIPG), 287 to 290 (NKID), and 315 to 317 (SAR). Positions 175 and 195 each coordinate Mg(2+).

It belongs to the TRAFAC class OBG-HflX-like GTPase superfamily. OBG GTPase family. Monomer. Requires Mg(2+) as cofactor.

Its subcellular location is the cytoplasm. Its function is as follows. An essential GTPase which binds GTP, GDP and possibly (p)ppGpp with moderate affinity, with high nucleotide exchange rates and a fairly low GTP hydrolysis rate. Plays a role in control of the cell cycle, stress response, ribosome biogenesis and in those bacteria that undergo differentiation, in morphogenesis control. This is GTPase Obg from Desulfovibrio desulfuricans (strain ATCC 27774 / DSM 6949 / MB).